The sequence spans 101 residues: DNA-binding protein TubR (101 aa).

Homodimer. Dimers bind to DNA, forming a protein-bound filament which may form a helix around the TubZ filament.

Its function is as follows. A DNA-binding protein that is part of the type III plasmid partition system used to ensure correct segregation of the pBM400 plasmid. Binds the plasmid origin of replication, probably cooperatively, forming a ring or short helix with external DNA. Its effect on RNA expression has not been shown. The polypeptide is DNA-binding protein TubR (Priestia megaterium (strain ATCC 12872 / QMB1551) (Bacillus megaterium)).